The primary structure comprises 273 residues: 4-hydroxy-tetrahydrodipicolinate reductase (273 aa).

Residues glycine 12–methionine 17 and glutamate 38 contribute to the NAD(+) site. NADP(+) is bound at residue arginine 39. NAD(+)-binding positions include glycine 102–threonine 104 and alanine 126–phenylalanine 129. The active-site Proton donor/acceptor is the histidine 159. Residue histidine 160 participates in (S)-2,3,4,5-tetrahydrodipicolinate binding. The active-site Proton donor is lysine 163. Glycine 169–threonine 170 contacts (S)-2,3,4,5-tetrahydrodipicolinate.

This sequence belongs to the DapB family. As to quaternary structure, homotetramer.

It localises to the cytoplasm. The enzyme catalyses (S)-2,3,4,5-tetrahydrodipicolinate + NAD(+) + H2O = (2S,4S)-4-hydroxy-2,3,4,5-tetrahydrodipicolinate + NADH + H(+). The catalysed reaction is (S)-2,3,4,5-tetrahydrodipicolinate + NADP(+) + H2O = (2S,4S)-4-hydroxy-2,3,4,5-tetrahydrodipicolinate + NADPH + H(+). It functions in the pathway amino-acid biosynthesis; L-lysine biosynthesis via DAP pathway; (S)-tetrahydrodipicolinate from L-aspartate: step 4/4. Its function is as follows. Catalyzes the conversion of 4-hydroxy-tetrahydrodipicolinate (HTPA) to tetrahydrodipicolinate. In Shigella boydii serotype 18 (strain CDC 3083-94 / BS512), this protein is 4-hydroxy-tetrahydrodipicolinate reductase.